The following is a 317-amino-acid chain: Nucleoside ABC transporter permease protein NupC (317 aa).

Helical transmembrane passes span 9–29, 35–55, 62–82, 98–118, 132–151, 155–172, 203–223, 225–245, 251–271, and 286–306; these read IIVANMLIYSTPLIFTSIGGV, GIVNVGLEGIMTIGAFSSVVF, MFGSMTPWLSILFGALIGALF, IVSGTVLNLMAPALGVFLLQV, GYWNVPLLSNIPVIGKIFFT, LPGFLAIVVAILAWYVLF, AGVLLSGVLGGVGGAIYAQAI, GNFSVSTIAGQGFISLAAMIF, IGAMLSSLLFGLFTSLAVVGG, and MAPYVFTIIVLALFLGKAIAP.

This sequence belongs to the binding-protein-dependent transport system permease family. The complex is composed of two ATP-binding proteins (NupA), two transmembrane proteins (NupB and NupC) and a solute-binding protein (BmpA).

Its subcellular location is the cell membrane. In terms of biological role, part of an ABC transporter complex involved in the uptake of all common nucleosides. Responsible for the translocation of the substrate across the membrane. The protein is Nucleoside ABC transporter permease protein NupC of Lactococcus lactis subsp. cremoris (strain MG1363).